A 187-amino-acid polypeptide reads, in one-letter code: uncharacterized protein (187 aa).

This is an uncharacterized protein from Saccharomyces cerevisiae (strain ATCC 204508 / S288c) (Baker's yeast).